A 476-amino-acid chain; its full sequence is Probable secreted beta-glucosidase SIM1 (476 aa).

The first 19 residues, 1–19 (MKFSTAVTTLISSGAIVSA), serve as a signal peptide directing secretion. The span at 111 to 203 (ATASTSQGAS…SSSSSSSGSG (93 aa)) shows a compositional bias: low complexity. Positions 111 to 214 (ATASTSQGAS…IYGDLADFSG (104 aa)) are disordered. An N-linked (GlcNAc...) asparagine glycan is attached at Asn423.

It belongs to the SUN family.

The protein resides in the secreted. Its subcellular location is the cell wall. Functionally, involved in the remodeling of the cell wall during the various phases of yeast culture development and under various environmental conditions. Required for the maintenance of the CLB5 kinase activity. The chain is Probable secreted beta-glucosidase SIM1 (SIM1) from Saccharomyces cerevisiae (strain ATCC 204508 / S288c) (Baker's yeast).